A 271-amino-acid polypeptide reads, in one-letter code: Formamidopyrimidine-DNA glycosylase (271 aa).

Pro2 functions as the Schiff-base intermediate with DNA in the catalytic mechanism. The Proton donor role is filled by Glu3. Lys57 (proton donor; for beta-elimination activity) is an active-site residue. DNA-binding residues include His90, Arg109, and Arg151. An FPG-type zinc finger spans residues 236-270 (MVYGRAGEACVTCKTKLQEIRQSNRSSVFCPSCQQ). The active-site Proton donor; for delta-elimination activity is Arg260.

This sequence belongs to the FPG family. In terms of assembly, monomer. The cofactor is Zn(2+).

The enzyme catalyses Hydrolysis of DNA containing ring-opened 7-methylguanine residues, releasing 2,6-diamino-4-hydroxy-5-(N-methyl)formamidopyrimidine.. It catalyses the reaction 2'-deoxyribonucleotide-(2'-deoxyribose 5'-phosphate)-2'-deoxyribonucleotide-DNA = a 3'-end 2'-deoxyribonucleotide-(2,3-dehydro-2,3-deoxyribose 5'-phosphate)-DNA + a 5'-end 5'-phospho-2'-deoxyribonucleoside-DNA + H(+). Involved in base excision repair of DNA damaged by oxidation or by mutagenic agents. Acts as a DNA glycosylase that recognizes and removes damaged bases. Has a preference for oxidized purines, such as 7,8-dihydro-8-oxoguanine (8-oxoG). Has AP (apurinic/apyrimidinic) lyase activity and introduces nicks in the DNA strand. Cleaves the DNA backbone by beta-delta elimination to generate a single-strand break at the site of the removed base with both 3'- and 5'-phosphates. In Colwellia psychrerythraea (strain 34H / ATCC BAA-681) (Vibrio psychroerythus), this protein is Formamidopyrimidine-DNA glycosylase.